Reading from the N-terminus, the 184-residue chain is Ribosome-recycling factor (184 aa).

It belongs to the RRF family.

It localises to the cytoplasm. Functionally, responsible for the release of ribosomes from messenger RNA at the termination of protein biosynthesis. May increase the efficiency of translation by recycling ribosomes from one round of translation to another. The sequence is that of Ribosome-recycling factor from Acholeplasma laidlawii (strain PG-8A).